The sequence spans 220 residues: Adenylate kinase (220 aa).

10–15 (GSGKST) provides a ligand contact to ATP. The segment at 30–59 (ASGDIIRAEIKARTPLGIEMERYLSRGDLI) is NMP. AMP-binding positions include Arg36, 57–59 (DLI), 83–86 (GYPR), and Gln90. The interval 124 to 161 (GRRICSKCGAVYHVEFNPPKVPGKCDICGGELIQRPDD) is LID. An ATP-binding site is contributed by Arg125. Zn(2+) contacts are provided by Cys128 and Cys131. 134 to 135 (VY) is an ATP binding site. Zn(2+) contacts are provided by Cys148 and Cys151. 2 residues coordinate AMP: Arg158 and Arg169. Gly197 is a binding site for ATP.

It belongs to the adenylate kinase family. In terms of assembly, monomer.

It is found in the cytoplasm. It catalyses the reaction AMP + ATP = 2 ADP. The protein operates within purine metabolism; AMP biosynthesis via salvage pathway; AMP from ADP: step 1/1. Its function is as follows. Catalyzes the reversible transfer of the terminal phosphate group between ATP and AMP. Plays an important role in cellular energy homeostasis and in adenine nucleotide metabolism. The polypeptide is Adenylate kinase (Pyrococcus abyssi (strain GE5 / Orsay)).